The chain runs to 89 residues: Protein S100-A6 (89 aa).

EF-hand domains lie at 12 to 47 and 48 to 83; these read LVAI…IGAK and LQDA…LALI. Ca(2+)-binding residues include T28 and E33. K40 bears the N6-acetyllysine mark. N6-acetyllysine; alternate is present on K47. K47 is modified (N6-succinyllysine; alternate). The Ca(2+) site is built by D61, N63, D65, E67, and E72.

Belongs to the S-100 family. As to quaternary structure, homodimer; head to tail assembly of 2 subunits. Interacts with CACYBP in a calcium-dependent manner. Interacts with ANXA2 and ANXA11 (via N-terminus). Interacts with SUGT1. Interacts with TP53; has higher affinity for TP53 that is phosphorylated on its N-terminal domain, and lower affinity for TP53 that is phosphorylated on its C-terminal domain. Interacts with tropomyosin. Interacts with FKBP4. Interacts with PPP5C (via TPR repeats); the interaction is calcium-dependent and modulates PPP5C activity. Interacts with TPPP; this interaction inhibits TPPP dimerization.

It is found in the nucleus envelope. The protein resides in the cytoplasm. The protein localises to the cell membrane. May function as calcium sensor and modulator, contributing to cellular calcium signaling. May function by interacting with other proteins, such as TPR-containing proteins, and indirectly play a role in many physiological processes such as the reorganization of the actin cytoskeleton and in cell motility. Binds 2 calcium ions. Calcium binding is cooperative. This is Protein S100-A6 (S100a6) from Rattus norvegicus (Rat).